We begin with the raw amino-acid sequence, 312 residues long: MFFTVRNLSNRTSQVVNYAYIQYRLLSSTTKTKGLPRLIKAIQGSSKDQLADDHLHMIDDHRYGEDSWFVSSTPKAETMGVADGVGGWRRLGIDSGLFAQELMTNCSEFAEQPQYDGSDPRQLLIDSFDQMKKMSGKVCGSSTACLVTLHRRDCTLHSANLGDSGFMVLRNGKVLHRSDEQLHGFNTPYQLTVAPEPGMDCILCDSPQQAVTSHINVQQGDLVLLATDGLFDNVPESMLVRHLQPLHGETRMEHLQHAVNRLVDMAKTLSLSNTFQSPFALKAKASNMNYGVGGKPDDITVILASVDVPDKD.

The region spanning 42–306 (IQGSSKDQLA…DDITVILASV (265 aa)) is the PPM-type phosphatase domain. Residues D83, G84, and D228 each coordinate Mn(2+).

The protein belongs to the PP2C family. It depends on Mg(2+) as a cofactor. Requires Mn(2+) as cofactor.

It carries out the reaction O-phospho-L-seryl-[protein] + H2O = L-seryl-[protein] + phosphate. The catalysed reaction is O-phospho-L-threonyl-[protein] + H2O = L-threonyl-[protein] + phosphate. This Drosophila mojavensis (Fruit fly) protein is Protein phosphatase PTC7 homolog fig.